A 146-amino-acid chain; its full sequence is VHLTAEEKDAVLGLWGKVNVQEVGGEALGRLLVVYPWTQRFFESFGDLSSADAVMNNPKVKAHGKKVLDSFADGLKHLDNLKGTFAALSELHCDQLHVDPENFRLLGNELVVVLARTFGKEFTPELQAAYQKVVAGVANALAHRYH.

At Val-1 the chain carries N-acetylvaline. The region spanning 2 to 146 is the Globin domain; it reads HLTAEEKDAV…VANALAHRYH (145 aa). Residue Ser-44 is modified to Phosphoserine. Lys-59 carries the N6-acetyllysine modification. His-63 is a heme b binding site. Lys-82 is subject to N6-acetyllysine. Residue His-92 participates in heme b binding. Position 93 is an S-nitrosocysteine (Cys-93).

Belongs to the globin family. Heterotetramer of two alpha chains and two beta chains. In terms of tissue distribution, red blood cells.

Involved in oxygen transport from the lung to the various peripheral tissues. In Hippopotamus amphibius (Hippopotamus), this protein is Hemoglobin subunit beta (HBB).